The following is a 283-amino-acid chain: Pantothenate synthetase 1 (283 aa).

30–37 (MGYLHDGH) contacts ATP. Catalysis depends on H37, which acts as the Proton donor. Q61 is a (R)-pantoate binding site. Residue Q61 coordinates beta-alanine. 147 to 150 (GQKD) serves as a coordination point for ATP. (R)-pantoate is bound at residue Q153. ATP is bound by residues V176 and 184 to 187 (MSSR).

It belongs to the pantothenate synthetase family. Homodimer.

The protein resides in the cytoplasm. The catalysed reaction is (R)-pantoate + beta-alanine + ATP = (R)-pantothenate + AMP + diphosphate + H(+). The protein operates within cofactor biosynthesis; (R)-pantothenate biosynthesis; (R)-pantothenate from (R)-pantoate and beta-alanine: step 1/1. Its function is as follows. Catalyzes the condensation of pantoate with beta-alanine in an ATP-dependent reaction via a pantoyl-adenylate intermediate. This Bradyrhizobium diazoefficiens (strain JCM 10833 / BCRC 13528 / IAM 13628 / NBRC 14792 / USDA 110) protein is Pantothenate synthetase 1.